The primary structure comprises 185 residues: Pyridoxal 5'-phosphate synthase subunit PdxT (185 aa).

Position 46–48 (46–48) interacts with L-glutamine; sequence GES. Residue Cys-75 is the Nucleophile of the active site. L-glutamine contacts are provided by residues Arg-101 and 129–130; that span reads IR. Residues His-165 and Glu-167 each act as charge relay system in the active site.

Belongs to the glutaminase PdxT/SNO family. As to quaternary structure, in the presence of PdxS, forms a dodecamer of heterodimers. Only shows activity in the heterodimer.

It carries out the reaction aldehydo-D-ribose 5-phosphate + D-glyceraldehyde 3-phosphate + L-glutamine = pyridoxal 5'-phosphate + L-glutamate + phosphate + 3 H2O + H(+). It catalyses the reaction L-glutamine + H2O = L-glutamate + NH4(+). It functions in the pathway cofactor biosynthesis; pyridoxal 5'-phosphate biosynthesis. In terms of biological role, catalyzes the hydrolysis of glutamine to glutamate and ammonia as part of the biosynthesis of pyridoxal 5'-phosphate. The resulting ammonia molecule is channeled to the active site of PdxS. This chain is Pyridoxal 5'-phosphate synthase subunit PdxT, found in Staphylococcus epidermidis (strain ATCC 12228 / FDA PCI 1200).